Reading from the N-terminus, the 186-residue chain is Holliday junction branch migration complex subunit RuvA (186 aa).

The domain I stretch occupies residues 1–61; it reads MYSYIKGKVV…ENLQILYGFN (61 aa). Residues 62–134 are domain II; sequence DNKNLLFFKK…LKGDLIFSEK (73 aa). The interval 134-135 is flexible linker; the sequence is KI. The segment at 136–186 is domain III; the sequence is ILNPKKTELEKILLNLGFVKKEIKSVLNQIDDKKELELMLKEVLLKLAKNI.

The protein belongs to the RuvA family. In terms of assembly, homotetramer. Forms an RuvA(8)-RuvB(12)-Holliday junction (HJ) complex. HJ DNA is sandwiched between 2 RuvA tetramers; dsDNA enters through RuvA and exits via RuvB. An RuvB hexamer assembles on each DNA strand where it exits the tetramer. Each RuvB hexamer is contacted by two RuvA subunits (via domain III) on 2 adjacent RuvB subunits; this complex drives branch migration. In the full resolvosome a probable DNA-RuvA(4)-RuvB(12)-RuvC(2) complex forms which resolves the HJ.

The protein resides in the cytoplasm. Its function is as follows. The RuvA-RuvB-RuvC complex processes Holliday junction (HJ) DNA during genetic recombination and DNA repair, while the RuvA-RuvB complex plays an important role in the rescue of blocked DNA replication forks via replication fork reversal (RFR). RuvA specifically binds to HJ cruciform DNA, conferring on it an open structure. The RuvB hexamer acts as an ATP-dependent pump, pulling dsDNA into and through the RuvAB complex. HJ branch migration allows RuvC to scan DNA until it finds its consensus sequence, where it cleaves and resolves the cruciform DNA. This chain is Holliday junction branch migration complex subunit RuvA, found in Phytoplasma mali (strain AT).